Consider the following 166-residue polypeptide: Stress response protein NhaX (166 aa).

The protein belongs to the universal stress protein A family.

In Bacillus subtilis (strain 168), this protein is Stress response protein NhaX (nhaX).